The sequence spans 334 residues: HTH-type transcriptional regulator RegA (334 aa).

Positions methionine 1–threonine 57 constitute an HTH lacI-type domain. The H-T-H motif DNA-binding region spans isoleucine 5 to asparagine 24.

Involved in the regulation of amylase production. The polypeptide is HTH-type transcriptional regulator RegA (regA) (Clostridium acetobutylicum (strain ATCC 824 / DSM 792 / JCM 1419 / IAM 19013 / LMG 5710 / NBRC 13948 / NRRL B-527 / VKM B-1787 / 2291 / W)).